A 943-amino-acid polypeptide reads, in one-letter code: Protein translocase subunit SecA (943 aa).

Residues Gln90, 108-112 (GEGKT), and Asp509 each bind ATP. The disordered stretch occupies residues 534-576 (KPDNEHKPPIPQQRSSKAGGGFASKSESISNKNSKSSGASLFP). The span at 556–570 (ASKSESISNKNSKSS) shows a compositional bias: low complexity.

The protein belongs to the SecA family. As to quaternary structure, monomer and homodimer. Part of the essential Sec protein translocation apparatus which comprises SecA, SecYEG and auxiliary proteins SecDF. Other proteins may also be involved.

The protein localises to the cell inner membrane. The protein resides in the cellular thylakoid membrane. It is found in the cytoplasm. It catalyses the reaction ATP + H2O + cellular proteinSide 1 = ADP + phosphate + cellular proteinSide 2.. Functionally, part of the Sec protein translocase complex. Interacts with the SecYEG preprotein conducting channel. Has a central role in coupling the hydrolysis of ATP to the transfer of proteins into and across the cell membrane, serving as an ATP-driven molecular motor driving the stepwise translocation of polypeptide chains across the membrane. Its function is as follows. Probably participates in protein translocation into and across both the cytoplasmic and thylakoid membranes in cyanobacterial cells. This Prochlorococcus marinus (strain MIT 9515) protein is Protein translocase subunit SecA.